Consider the following 139-residue polypeptide: Actin-depolymerizing factor 2 (139 aa).

One can recognise an ADF-H domain in the interval 7 to 139 (GLAVSDECKV…SLDIVKSRTN (133 aa)).

The protein belongs to the actin-binding proteins ADF family. As to expression, expressed in pollen.

Its function is as follows. Actin-depolymerizing protein. Severs actin filaments (F-actin) and binds to actin monomers. The polypeptide is Actin-depolymerizing factor 2 (ADF2) (Zea mays (Maize)).